Reading from the N-terminus, the 229-residue chain is Potassium/proton antiporter CemA (229 aa).

3 helical membrane-spanning segments follow: residues 7 to 27 (FTPL…SLLF), 107 to 127 (ILHF…SIFG), and 189 to 209 (IISG…KYWI).

This sequence belongs to the CemA family.

The protein localises to the plastid. It localises to the chloroplast inner membrane. It catalyses the reaction K(+)(in) + H(+)(out) = K(+)(out) + H(+)(in). In terms of biological role, contributes to K(+)/H(+) antiport activity by supporting proton efflux to control proton extrusion and homeostasis in chloroplasts in a light-dependent manner to modulate photosynthesis. Prevents excessive induction of non-photochemical quenching (NPQ) under continuous-light conditions. Indirectly promotes efficient inorganic carbon uptake into chloroplasts. The protein is Potassium/proton antiporter CemA of Guizotia abyssinica (Niger).